Here is a 332-residue protein sequence, read N- to C-terminus: 6-phosphogluconolactonase (332 aa).

This sequence belongs to the cycloisomerase 2 family.

It catalyses the reaction 6-phospho-D-glucono-1,5-lactone + H2O = 6-phospho-D-gluconate + H(+). It functions in the pathway carbohydrate degradation; pentose phosphate pathway; D-ribulose 5-phosphate from D-glucose 6-phosphate (oxidative stage): step 2/3. Functionally, catalyzes the hydrolysis of 6-phosphogluconolactone to 6-phosphogluconate. The chain is 6-phosphogluconolactonase from Pectobacterium atrosepticum (strain SCRI 1043 / ATCC BAA-672) (Erwinia carotovora subsp. atroseptica).